The primary structure comprises 777 residues: Phosphoribosylformylglycinamidine synthase subunit PurL (777 aa).

The active site involves H50. ATP contacts are provided by Y53 and K92. Residue E94 participates in Mg(2+) binding. Residues 95–98 (SHNH) and R117 contribute to the substrate site. The active-site Proton acceptor is H96. D118 lines the Mg(2+) pocket. Q241 is a substrate binding site. D269 serves as a coordination point for Mg(2+). 313–315 (ESQ) is a binding site for substrate. 2 residues coordinate ATP: D516 and G553. N554 contributes to the Mg(2+) binding site. A substrate-binding site is contributed by S556.

This sequence belongs to the FGAMS family. In terms of assembly, monomer. Part of the FGAM synthase complex composed of 1 PurL, 1 PurQ and 2 PurS subunits.

The protein localises to the cytoplasm. It carries out the reaction N(2)-formyl-N(1)-(5-phospho-beta-D-ribosyl)glycinamide + L-glutamine + ATP + H2O = 2-formamido-N(1)-(5-O-phospho-beta-D-ribosyl)acetamidine + L-glutamate + ADP + phosphate + H(+). It participates in purine metabolism; IMP biosynthesis via de novo pathway; 5-amino-1-(5-phospho-D-ribosyl)imidazole from N(2)-formyl-N(1)-(5-phospho-D-ribosyl)glycinamide: step 1/2. Functionally, part of the phosphoribosylformylglycinamidine synthase complex involved in the purines biosynthetic pathway. Catalyzes the ATP-dependent conversion of formylglycinamide ribonucleotide (FGAR) and glutamine to yield formylglycinamidine ribonucleotide (FGAM) and glutamate. The FGAM synthase complex is composed of three subunits. PurQ produces an ammonia molecule by converting glutamine to glutamate. PurL transfers the ammonia molecule to FGAR to form FGAM in an ATP-dependent manner. PurS interacts with PurQ and PurL and is thought to assist in the transfer of the ammonia molecule from PurQ to PurL. The sequence is that of Phosphoribosylformylglycinamidine synthase subunit PurL from Synechococcus elongatus (strain ATCC 33912 / PCC 7942 / FACHB-805) (Anacystis nidulans R2).